The following is a 437-amino-acid chain: C-terminal-binding protein 2 (437 aa).

Residues serine 103, 183-188 (IGLGRI), aspartate 207, 240-246 (CNLNEHN), 267-269 (TAR), and aspartate 293 each bind NAD(+). Arginine 269 is a catalytic residue. Glutamate 298 is a catalytic residue. Histidine 318 acts as the Proton donor in catalysis. 318–321 (HTAW) lines the NAD(+) pocket. Residues 410–437 (PLIPSVSHTPSPGQTTKPDPDREIPTDQ) form a disordered region. Positions 415–426 (VSHTPSPGQTTK) are enriched in polar residues. The span at 427–437 (PDPDREIPTDQ) shows a compositional bias: basic and acidic residues.

It belongs to the D-isomer specific 2-hydroxyacid dehydrogenase family. Interacts with the C-terminus of tcf7l1-a via the consensus motifs P-X-[DNS]-L-[STVA].

The protein resides in the nucleus. Its function is as follows. Corepressor targeting diverse transcription regulators. This is C-terminal-binding protein 2 (ctbp2) from Xenopus laevis (African clawed frog).